The primary structure comprises 440 residues: Serine/threonine-protein kinase STK11 (440 aa).

One can recognise a Protein kinase domain in the interval 49–309 (YLMGDLLGEG…IQQIRQHNWF (261 aa)). ATP is bound by residues 55 to 63 (LGEGSYGKV) and lysine 78. The active-site Proton acceptor is aspartate 176. Threonine 336 and threonine 365 each carry phosphothreonine; by autocatalysis. Residues 370 to 440 (VPGQVPEEEA…IRKLSTCKQQ (71 aa)) form a disordered region. Over residues 430–440 (KIRKLSTCKQQ) the composition is skewed to basic residues. A Phosphoserine; by PKA modification is found at serine 435.

The protein belongs to the protein kinase superfamily. CAMK Ser/Thr protein kinase family. LKB1 subfamily. As to quaternary structure, catalytic component of a trimeric complex composed of STK11/LKB1, STRAD (STRADA or STRADB) and CAB39/MO25 (CAB39/MO25alpha or CAB39L/MO25beta). It depends on Mg(2+) as a cofactor. Requires Mn(2+) as cofactor. Ubiquitously expressed in all tissues tested. High levels were observed in duodenum and skeletal muscle, lower levels in liver and pancreas.

The protein localises to the nucleus. It localises to the cytoplasm. The catalysed reaction is L-seryl-[protein] + ATP = O-phospho-L-seryl-[protein] + ADP + H(+). The enzyme catalyses L-threonyl-[protein] + ATP = O-phospho-L-threonyl-[protein] + ADP + H(+). Tumor suppressor serine/threonine-protein kinase that controls the activity of AMP-activated protein kinase (AMPK) family members, thereby playing a role in various processes such as cell metabolism, cell polarity, apoptosis and DNA damage response. Acts by phosphorylating the T-loop of AMPK family proteins, leading to promote their activity. The polypeptide is Serine/threonine-protein kinase STK11 (Gallus gallus (Chicken)).